The chain runs to 368 residues: Trans-enoyl reductase thnE (368 aa).

53-56 lines the NADP(+) pocket; the sequence is VDVK. 140 to 147 serves as a coordination point for substrate; the sequence is LATATAAY. Residues 179–182, 202–205, tyrosine 220, and 267–268 contribute to the NADP(+) site; these read STAT, SPSN, and VE. Residue 289 to 293 participates in substrate binding; sequence VMTVW. 358 to 359 lines the NADP(+) pocket; that stretch reads PS.

The protein belongs to the zinc-containing alcohol dehydrogenase family. As to quaternary structure, monomer.

The catalysed reaction is malate + 6 malonyl-CoA + acetyl-CoA + 2 AH2 + 2 S-adenosyl-L-methionine + 5 NADPH + 9 H(+) = trihazone A + 2 A + 2 S-adenosyl-L-homocysteine + 6 CO2 + 5 NADP(+) + 7 CoA + 6 H2O. It participates in secondary metabolite biosynthesis. Trans-enoyl reductase; part of the gene cluster that produces the tetronate natural products trihazones. The PKS-NRPS synthetase thnA with the help of the trans-enoyl reductase thnE are responsible for the synthesis of the carboxylmethyl containing trihazone A. The PKS portion of thnA synthesizes beta-keto-triene chain from one acetyl-CoA and 6 equivalents of malonyl-CoA, in collaboration with thnE, which selectively reduces the enoyl intermediate during the first and fourth iteration of the PKS. The NRPS domain selects and activates malate, of which the alpha-hydroxyl group attacks the completed polyketide acyl-S-ACP chain to form the ester product. Intramolecular Dieckmann cyclization catalyzed by the terminal reductase domain releases the product as trihazone A from the PKS-NPRS. The pathway begins with the formation of trihazone A by the hybrid PKS-NRPS synthetase thnA and the trans-enoyl reductase thnE. Trihazone A is further decarboxylated by the 2-oxoglutarate-dependent dioxygenase thnC to produce trihazone D. The function of the FAD-dependent monooxygenase thnD has still to be identified. This Trichoderma harzianum (Hypocrea lixii) protein is Trans-enoyl reductase thnE.